Here is a 467-residue protein sequence, read N- to C-terminus: Uronate isomerase (467 aa).

The protein belongs to the metallo-dependent hydrolases superfamily. Uronate isomerase family.

It catalyses the reaction D-glucuronate = D-fructuronate. It carries out the reaction aldehydo-D-galacturonate = keto-D-tagaturonate. It functions in the pathway carbohydrate metabolism; pentose and glucuronate interconversion. This chain is Uronate isomerase, found in Staphylococcus haemolyticus (strain JCSC1435).